The following is a 174-amino-acid chain: Large ribosomal subunit protein uL18 (174 aa).

The protein belongs to the universal ribosomal protein uL18 family. Part of the 50S ribosomal subunit. Contacts the 5S and 23S rRNAs.

Its function is as follows. This is one of the proteins that bind and probably mediate the attachment of the 5S RNA into the large ribosomal subunit, where it forms part of the central protuberance. This is Large ribosomal subunit protein uL18 from Methanosarcina acetivorans (strain ATCC 35395 / DSM 2834 / JCM 12185 / C2A).